We begin with the raw amino-acid sequence, 174 residues long: ATP-dependent protease subunit HslV (174 aa).

Thr-2 is an active-site residue. The Na(+) site is built by Gly-159, Asp-162, and Thr-165.

This sequence belongs to the peptidase T1B family. HslV subfamily. In terms of assembly, a double ring-shaped homohexamer of HslV is capped on each side by a ring-shaped HslU homohexamer. The assembly of the HslU/HslV complex is dependent on binding of ATP.

The protein resides in the cytoplasm. The catalysed reaction is ATP-dependent cleavage of peptide bonds with broad specificity.. Its activity is regulated as follows. Allosterically activated by HslU binding. Its function is as follows. Protease subunit of a proteasome-like degradation complex believed to be a general protein degrading machinery. The protein is ATP-dependent protease subunit HslV of Lacticaseibacillus casei (strain BL23) (Lactobacillus casei).